Here is a 627-residue protein sequence, read N- to C-terminus: Interferon-induced GTP-binding protein MxB (627 aa).

Residues 34-307 form the Dynamin-type G domain; it reads DLALPAIAVI…LVHHIQRSLP (274 aa). The interval 44-51 is G1 motif; it reads GDQSSGKS. Residue 44-51 coordinates GTP; sequence GDQSSGKS. The interval 69 to 71 is G2 motif; sequence VTR. The interval 145 to 148 is G3 motif; it reads DLPG. GTP contacts are provided by residues 145 to 149 and 214 to 217; these read DLPGI and TKPD. The tract at residues 214-217 is G4 motif; sequence TKPD. The tract at residues 246–249 is G5 motif; sequence RCRG. In terms of domain architecture, GED spans 541–627; sequence LSEMKLHLES…MKAQNLLATY (87 aa).

The protein belongs to the TRAFAC class dynamin-like GTPase superfamily. Dynamin/Fzo/YdjA family.

It localises to the cytoplasm. The polypeptide is Interferon-induced GTP-binding protein MxB (mxb) (Danio rerio (Zebrafish)).